The following is a 209-amino-acid chain: Ras-like GTP-binding protein RYL2 (209 aa).

Residue 12 to 19 (GAQGVGKT) coordinates GTP. Residues 34-42 (QASTIGASF) carry the Effector region motif. GTP contacts are provided by residues 60–64 (DTAGQ) and 118–121 (TKVD). Residues C208 and C209 are each lipidated (S-geranylgeranyl cysteine).

This sequence belongs to the small GTPase superfamily. Rab family.

The protein localises to the cell membrane. In terms of biological role, protein transport. Probably involved in vesicular traffic. The chain is Ras-like GTP-binding protein RYL2 (RYL2) from Yarrowia lipolytica (strain CLIB 122 / E 150) (Yeast).